The primary structure comprises 515 residues: Ribosome assembly protein 4 (515 aa).

The interaction with MDN1 stretch occupies residues 20–128; it reads REVAIIPKDL…LLYTPRAVFK (109 aa). The segment at 29–125 is ubiquitin-like (UBL) domain; the sequence is LPNVSIKFQA…QITLLYTPRA (97 aa). WD repeat units lie at residues 141–181, 184–223, 227–273, 276–314, 352–396, 400–439, 442–481, and 484–515; these read GHGS…PMHT, GHYNWVLCVSWSPDGEVIATGSMDNTIRLWDPKSGQCLGD, GHSK…CQYT, GHTNSVSCVKWGGQGLLYSGSHDRTVRVWDINSQGRCIN, AQKK…KPIA, GHQKLVNHVAFSPDGRYIVSASFDNSIKLWDGRDGKFIST, GHVASVYQVAWSSDCRLLVSCSKDTTLKVWDVRTRKLSVD, and GHKDEVYTVDWSVDGKRVCSGGKDKMVRLWTH.

The protein belongs to the NLE1/RSA4 family. Associates with the pre-60S ribosomal particle. Interacts (via WD repeats) with uL18 (RPL5). Interacts (via UBL domain) with MDN1 (via VWFA/MIDAS domain). Interacts (via WD repeats) with NSA2.

It is found in the nucleus. The protein resides in the nucleolus. Involved in ribosome biogenesis. Required for processing and efficient intra-nuclear transport of pre-60S ribosomal subunits. Interacts with the AAA-ATPase Midasin (MDN1/REA1), which is essential for the ATP-dependent dissociation of a group of nonribosomal factors from the pre-60S particle. The sequence is that of Ribosome assembly protein 4 from Saccharomyces cerevisiae (strain ATCC 204508 / S288c) (Baker's yeast).